The chain runs to 662 residues: MDWDQDRSNTELRKEKSRDAARSRRSQETEVLYQLAHTLPFARGVSAHLDKASIMRLTISYLRMHRLCAAGEWNQVEKGGEPLDACYLKALEGFVMVLTAEGDMAYLSENVSKHLGLSQLELIGHSIFDFIHPCDQEELQDALTPRPNLSKKKLEAPTERHFSLRMKSTLTSRGRTLNLKAATWKVLHCSGHMRAYKPPAQTSPAGSPRSEPPLQCLVLICEAIPHPASLEPPLGRGAFLSRHSLDMKFTYCDERIAEVAGYSPDDLIGCSAYEYIHALDSDAVSRSIHTLLSKGQAVTGQYRFLARTGGYLWTQTQATVVSGGRGPQSESIICVHFLISRVEETGVVLSLEQTEQHTRRPPRLSASSQKGIPGNSVDSPAPRILAFLHPPALSEASLAADPRRFCSPDLRRLMAPILDGPPPAATPSTPQATRRPQSPLPADLPDKLTVGLENAHRLSTAQKNKTVETDLDIAQDPDTLDLEMLAPYISMDDDFQLNSSEQLPKVHRRPPRVARRPRARSFHGLSPPIPEPSLLPRWGSDPRLNCSSPSRGDRPTASLMPGTRKRALAQSSEDKGLELLETKPPKRSPRLEPGSFLLPPLSLSFLLQGRQLPGNQQDPRAPLVHSHEPLGLAPSLLSLCQHEETVQPRNRFPPAAGLGQTH.

Residues 1-25 (MDWDQDRSNTELRKEKSRDAARSRR) form a disordered region. Residues 12–65 (LRKEKSRDAARSRRSQETEVLYQLAHTLPFARGVSAHLDKASIMRLTISYLRMH) enclose the bHLH domain. The segment at 75 to 98 (QVEKGGEPLDACYLKALEGFVMVL) is nuclear localization signal (isoform 2). 2 consecutive PAS domains span residues 80 to 150 (GEPL…PNLS) and 225 to 295 (PHPA…LSKG). A nuclear export signal (isoform 2) region spans residues 228–272 (ASLEPPLGRGAFLSRHSLDMKFTYCDERIAEVAGYSPDDLIGCSA). 2 disordered regions span residues 352–377 (EQTE…GNSV) and 416–446 (PILD…DLPD). The short motif at 414 to 418 (MAPIL) is the LRRLL element. The segment covering 426–437 (TPSTPQATRRPQ) has biased composition (low complexity). An ODD region spans residues 448–581 (LTVGLENAHR…SEDKGLELLE (134 aa)). Positions 450–501 (VGLENAHRLSTAQKNKTVETDLDIAQDPDTLDLEMLAPYISMDDDFQLNSSE) are NTAD. Lysine 463 participates in a covalent cross-link: Glycyl lysine isopeptide (Lys-Gly) (interchain with G-Cter in ubiquitin). The short motif at 485–492 (LAPYISMD) is the LAPYISMD element. Proline 487 is modified (4-hydroxyproline). The segment at 500-595 (SEQLPKVHRR…KRSPRLEPGS (96 aa)) is disordered. Positions 505 to 521 (KVHRRPPRVARRPRARS) are enriched in basic residues. A Glycyl lysine isopeptide (Lys-Gly) (interchain with G-Cter in ubiquitin) cross-link involves residue lysine 565. Residues 572-584 (SEDKGLELLETKP) are compositionally biased toward basic and acidic residues.

Isoform 1 interacts with ARNT. Isoform 2 interacts with HIF1A. Isoform 2 interacts EPAS1. Isoform 2 interacts (via C-terminus domain) with BAD; the interaction reduces the binding between BAD and BAX. Isoform 2 (via C-terminus domain) interacts with BCL2L2 and MCL1. Interacts with VHL. In normoxia, hydroxylated on Pro-487 in the oxygen-dependent degradation domain (ODD) by PHD. The hydroxylated proline promotes interaction with VHL, initiating rapid ubiquitination and subsequent proteasomal degradation. In terms of processing, ubiquitinated; ubiquitination occurs in a VHL- and oxygen-dependent pathway and subsequently targeted for proteasomal degradation. As to expression, isoform 3 is expressed in endothelial cells of vessels and capillaries in alveoli of the neonatal lung (at protein level). Expressed in lung, brain, heart and kidney. Isoform 2 is expressed in heart and lung. Isoform 2 is highly expressed in the epithelial cell layer of the cornea with lower expression in the layers of ganglion cells, inner nuclear cells, and rods and cones of the retina. Isoform 2 is expressed in the cerebellum only in the Purkinje cell layer.

The protein localises to the nucleus. It localises to the cytoplasm. The protein resides in the nucleus speckle. Its subcellular location is the mitochondrion. In terms of biological role, acts as a transcriptional regulator in adaptive response to low oxygen tension. Acts as a regulator of hypoxia-inducible gene expression. Plays a role in the development of the cardiorespiratory system. Acts as a positive regulator of hypoxia-inducible gene expression. Associates to core DNA sequence 5'-TACGTG-3' within the hypoxia response element (HRE) of target gene promoters in a ARNT-dependent manner, and hence also participates in the transcriptional activation of reporter genes driven by HRE. Its function is as follows. Attenuates the ability of transcription factor HIF1A, EPAS1 and the HIF1A-ARNT complex to bind to hypoxia-responsive elements (HRE) located within the enhancer/promoter of hypoxia-inducible target genes and hence inhibits HRE-driven transcriptional activation. Functions as an inhibitor of angiogenesis in hypoxic cells of the cornea. May act as a tumor suppressor. May also be involved in apoptosis. Functionally, attenuates the ability of transcription factor HIF1A, EPAS1 and the HIF1A-ARNT complex to bind to hypoxia-responsive elements (HRE) located within the enhancer/promoter of hypoxia-inducible target genes and hence inhibits HRE-driven transcriptional activation. Also plays a role in the development of the lung and heart during embryonic and neonatal stages. The polypeptide is Hypoxia-inducible factor 3-alpha (Mus musculus (Mouse)).